Consider the following 226-residue polypeptide: Cytidylate kinase (226 aa).

10-18 (GPASSGKST) is an ATP binding site.

It belongs to the cytidylate kinase family. Type 1 subfamily.

Its subcellular location is the cytoplasm. It carries out the reaction CMP + ATP = CDP + ADP. The catalysed reaction is dCMP + ATP = dCDP + ADP. This chain is Cytidylate kinase, found in Streptococcus pyogenes serotype M1.